Consider the following 500-residue polypeptide: Inner membrane transporter YjeM (500 aa).

At M1–L10 the chain is on the cytoplasmic side. Residues I11–F31 traverse the membrane as a helical segment. Residues Y32 to S37 are Periplasmic-facing. The helical transmembrane segment at A38–A58 threads the bilayer. The Cytoplasmic segment spans residues E59–Y83. Residues A84–A104 form a helical membrane-spanning segment. At K105 to R124 the chain is on the periplasmic side. Residues I125–V145 traverse the membrane as a helical segment. The Cytoplasmic portion of the chain corresponds to T146–G163. The chain crosses the membrane as a helical span at residues G164–L184. The Periplasmic segment spans residues N185–M209. Residues L210 to V230 traverse the membrane as a helical segment. Residues D231–G243 are Cytoplasmic-facing. Residues I244–V264 form a helical membrane-spanning segment. Residues S265–V308 are Periplasmic-facing. Residues G309–F329 form a helical membrane-spanning segment. Residues T330 to P361 lie on the Cytoplasmic side of the membrane. The helical transmembrane segment at A362 to G382 threads the bilayer. Residues G383–T394 are Periplasmic-facing. The helical transmembrane segment at L395–F415 threads the bilayer. At K416–S433 the chain is on the cytoplasmic side. Residues T434–I454 form a helical membrane-spanning segment. Over Q455–D462 the chain is Periplasmic. Residues W463–I483 traverse the membrane as a helical segment. Topologically, residues Y484–E500 are cytoplasmic.

Belongs to the amino acid-polyamine-organocation (APC) superfamily.

It is found in the cell inner membrane. The protein is Inner membrane transporter YjeM (yjeM) of Salmonella typhi.